The following is a 1176-amino-acid chain: DNA-directed RNA polymerase subunit beta (1176 aa).

Residues 13–30 (TDASLHQGRPQSSSNSSV) are compositionally biased toward polar residues. The disordered stretch occupies residues 13–35 (TDASLHQGRPQSSSNSSVPGAPN).

This sequence belongs to the RNA polymerase beta chain family. In terms of assembly, the RNAP catalytic core consists of 2 alpha, 1 beta, 1 beta' and 1 omega subunit. When a sigma factor is associated with the core the holoenzyme is formed, which can initiate transcription.

The catalysed reaction is RNA(n) + a ribonucleoside 5'-triphosphate = RNA(n+1) + diphosphate. Its function is as follows. DNA-dependent RNA polymerase catalyzes the transcription of DNA into RNA using the four ribonucleoside triphosphates as substrates. In Mycobacterium marinum (strain ATCC BAA-535 / M), this protein is DNA-directed RNA polymerase subunit beta.